We begin with the raw amino-acid sequence, 468 residues long: 6-phospho-beta-galactosidase (468 aa).

Positions 19, 116, 159, 160, and 297 each coordinate D-galactose 6-phosphate. Residue Glu-160 is the Proton donor of the active site. Glu-375 (nucleophile) is an active-site residue. D-galactose 6-phosphate contacts are provided by Ser-428, Trp-429, Lys-435, and Tyr-437.

The protein belongs to the glycosyl hydrolase 1 family.

The enzyme catalyses a 6-phospho-beta-D-galactoside + H2O = D-galactose 6-phosphate + an alcohol. It functions in the pathway carbohydrate metabolism; lactose degradation; D-galactose 6-phosphate and beta-D-glucose from lactose 6-phosphate: step 1/1. This Streptococcus mutans serotype c (strain ATCC 700610 / UA159) protein is 6-phospho-beta-galactosidase.